Here is an 85-residue protein sequence, read N- to C-terminus: Kappa-theraphotoxin-Cg1d (85 aa).

Positions 1-21 (MKVSVLITLAVLGVMFVWASA) are cleaved as a signal peptide. The propeptide occupies 22-51 (AELEERGSDQRDSPAWLKSMERIFQSEERE). 3 disulfide bridges follow: Cys-52/Cys-66, Cys-59/Cys-71, and Cys-65/Cys-78.

The protein belongs to the neurotoxin 10 (Hwtx-1) family. 28 (Jztx-11) subfamily. Expressed by the venom gland.

Its subcellular location is the secreted. Its function is as follows. Probable ion channel inhibitor. This Chilobrachys guangxiensis (Chinese earth tiger tarantula) protein is Kappa-theraphotoxin-Cg1d.